Reading from the N-terminus, the 213-residue chain is Orotate phosphoribosyltransferase (213 aa).

Residue K26 participates in 5-phospho-alpha-D-ribose 1-diphosphate binding. An orotate-binding site is contributed by 34-35 (FF). Residues 72–73 (YK), R99, K100, K103, H105, and 124–132 (DDVITAGTA) each bind 5-phospho-alpha-D-ribose 1-diphosphate. Positions 128 and 156 each coordinate orotate.

Belongs to the purine/pyrimidine phosphoribosyltransferase family. PyrE subfamily. As to quaternary structure, homodimer. The cofactor is Mg(2+).

It catalyses the reaction orotidine 5'-phosphate + diphosphate = orotate + 5-phospho-alpha-D-ribose 1-diphosphate. The protein operates within pyrimidine metabolism; UMP biosynthesis via de novo pathway; UMP from orotate: step 1/2. Catalyzes the transfer of a ribosyl phosphate group from 5-phosphoribose 1-diphosphate to orotate, leading to the formation of orotidine monophosphate (OMP). The chain is Orotate phosphoribosyltransferase from Vibrio cholerae serotype O1 (strain ATCC 39315 / El Tor Inaba N16961).